A 148-amino-acid polypeptide reads, in one-letter code: Arginine repressor (148 aa).

This sequence belongs to the ArgR family.

It is found in the cytoplasm. The protein operates within amino-acid biosynthesis; L-arginine biosynthesis [regulation]. Functionally, regulates arginine biosynthesis genes. The polypeptide is Arginine repressor (Chlorobium limicola (strain DSM 245 / NBRC 103803 / 6330)).